The following is a 154-amino-acid chain: Small ribosomal subunit protein uS13 (154 aa).

The protein belongs to the universal ribosomal protein uS13 family.

It localises to the cytoplasm. Its function is as follows. Located at the top of the head of the 40S subunit, it contacts several helices of the 18S rRNA. The sequence is that of Small ribosomal subunit protein uS13 (rps18) from Dictyostelium discoideum (Social amoeba).